We begin with the raw amino-acid sequence, 357 residues long: sn-glycerol-3-phosphate import ATP-binding protein UgpC (357 aa).

An ABC transporter domain is found at 4 to 235; that stretch reads LKLQAVTKSY…PASLFVASFI (232 aa). ATP is bound at residue 37 to 44; the sequence is GPSGCGKS.

The protein belongs to the ABC transporter superfamily. sn-glycerol-3-phosphate importer (TC 3.A.1.1.3) family. As to quaternary structure, the complex is composed of two ATP-binding proteins (UgpC), two transmembrane proteins (UgpA and UgpE) and a solute-binding protein (UgpB).

Its subcellular location is the cell inner membrane. The catalysed reaction is sn-glycerol 3-phosphate(out) + ATP + H2O = sn-glycerol 3-phosphate(in) + ADP + phosphate + H(+). Part of the ABC transporter complex UgpBAEC involved in sn-glycerol-3-phosphate (G3P) import. Responsible for energy coupling to the transport system. The polypeptide is sn-glycerol-3-phosphate import ATP-binding protein UgpC (Pectobacterium atrosepticum (strain SCRI 1043 / ATCC BAA-672) (Erwinia carotovora subsp. atroseptica)).